The chain runs to 250 residues: 2,3-bisphosphoglycerate-dependent phosphoglycerate mutase (250 aa).

Substrate-binding positions include 10 to 17 (RHGESQWN), 23 to 24 (TG), arginine 62, 89 to 92 (ERHY), lysine 100, 116 to 117 (RR), and 185 to 186 (GN). Histidine 11 serves as the catalytic Tele-phosphohistidine intermediate. Glutamate 89 acts as the Proton donor/acceptor in catalysis.

Belongs to the phosphoglycerate mutase family. BPG-dependent PGAM subfamily. As to quaternary structure, homodimer.

It catalyses the reaction (2R)-2-phosphoglycerate = (2R)-3-phosphoglycerate. The protein operates within carbohydrate degradation; glycolysis; pyruvate from D-glyceraldehyde 3-phosphate: step 3/5. Catalyzes the interconversion of 2-phosphoglycerate and 3-phosphoglycerate. This is 2,3-bisphosphoglycerate-dependent phosphoglycerate mutase from Salmonella choleraesuis (strain SC-B67).